The sequence spans 70 residues: Putative membrane protein insertion efficiency factor (70 aa).

The protein belongs to the UPF0161 family.

The protein resides in the cell membrane. Functionally, could be involved in insertion of integral membrane proteins into the membrane. This chain is Putative membrane protein insertion efficiency factor, found in Symbiobacterium thermophilum (strain DSM 24528 / JCM 14929 / IAM 14863 / T).